A 318-amino-acid polypeptide reads, in one-letter code: Probable cell division protein WhiA (318 aa).

Positions 281–314 (SLKELGEMLSPPVGKSGVNHRLRRIEKIAEELSK) form a DNA-binding region, H-T-H motif.

The protein belongs to the WhiA family.

In terms of biological role, involved in cell division and chromosome segregation. The sequence is that of Probable cell division protein WhiA from Clostridium tetani (strain Massachusetts / E88).